The primary structure comprises 101 residues: MPNSTPQSQLIRVHVFVTGRVQGVGFRYSTVDTASQLGLTGWVRNLPDGRVEAVFEGARDIVEEMVRWCHAGPPAAVVQDVAVEYEEPEGLRGFEVKRLVN.

The 87-residue stretch at 12–98 (RVHVFVTGRV…EGLRGFEVKR (87 aa)) folds into the Acylphosphatase-like domain. Active-site residues include arginine 27 and asparagine 45.

This sequence belongs to the acylphosphatase family.

The catalysed reaction is an acyl phosphate + H2O = a carboxylate + phosphate + H(+). This is Acylphosphatase (acyP) from Trichormus variabilis (strain ATCC 29413 / PCC 7937) (Anabaena variabilis).